The primary structure comprises 160 residues: SsrA-binding protein (160 aa).

Residues 131 to 160 (KKEYDKRHTERERDSDRELQRAVRTKGKED) form a disordered region.

The protein belongs to the SmpB family.

The protein localises to the cytoplasm. Required for rescue of stalled ribosomes mediated by trans-translation. Binds to transfer-messenger RNA (tmRNA), required for stable association of tmRNA with ribosomes. tmRNA and SmpB together mimic tRNA shape, replacing the anticodon stem-loop with SmpB. tmRNA is encoded by the ssrA gene; the 2 termini fold to resemble tRNA(Ala) and it encodes a 'tag peptide', a short internal open reading frame. During trans-translation Ala-aminoacylated tmRNA acts like a tRNA, entering the A-site of stalled ribosomes, displacing the stalled mRNA. The ribosome then switches to translate the ORF on the tmRNA; the nascent peptide is terminated with the 'tag peptide' encoded by the tmRNA and targeted for degradation. The ribosome is freed to recommence translation, which seems to be the essential function of trans-translation. In Pseudomonas fluorescens (strain ATCC BAA-477 / NRRL B-23932 / Pf-5), this protein is SsrA-binding protein.